The primary structure comprises 186 residues: Riboflavin kinase (186 aa).

Threonine 42 and asparagine 44 together coordinate Mg(2+). Glutamate 123 functions as the Nucleophile in the catalytic mechanism.

The protein belongs to the flavokinase family. Zn(2+) is required as a cofactor. Requires Mg(2+) as cofactor.

It catalyses the reaction riboflavin + ATP = FMN + ADP + H(+). It functions in the pathway cofactor biosynthesis; FMN biosynthesis; FMN from riboflavin (ATP route): step 1/1. Its function is as follows. Catalyzes the phosphorylation of riboflavin (vitamin B2) to form flavin mononucleotide (FMN) coenzyme. The chain is Riboflavin kinase (FMN1) from Eremothecium gossypii (strain ATCC 10895 / CBS 109.51 / FGSC 9923 / NRRL Y-1056) (Yeast).